The primary structure comprises 359 residues: Lachesin (359 aa).

The first 25 residues, 1–25 (MWRPSISNCVWSTLLLAIFVQQTLA), serve as a signal peptide directing secretion. The 102-residue stretch at 29 to 130 (PTISYITQEQ…HKVSAEVKLS (102 aa)) folds into the Ig-like V-type domain. Cysteines 50 and 113 form a disulfide. 2 N-linked (GlcNAc...) asparagine glycosylation sites follow: Asn-92 and Asn-140. Ig-like C2-type domains are found at residues 135 to 221 (PVIS…INVE) and 226 to 317 (PVIT…ARVN). Cystine bridges form between Cys-157-Cys-204 and Cys-247-Cys-303. The GPI-anchor amidated alanine moiety is linked to residue Ala-336. Residues 337-359 (GAEDVSATSFALVGILAALLFAR) constitute a propeptide, removed in mature form.

As to expression, expressed on differentiating neuronal cells from the onset of neurogenesis in both the central and peripheral nervous systems. First detected in the cellularized blastoderm, apart from in the ventral side. Expression persists uniformly in the early ectoderm until the end of gastrulation. From stage 10, expressed in an alternating strong/weak pattern in each segment until stage 15 when it disappears. From stage 11, expressed in subsets of neurons and later subsets of glial cells. From early stage 13, strongly expressed in trachea, hindgut, foregut and the nervous system.

Its subcellular location is the cell membrane. Functionally, required for normal tracheal development and maintenance of the trans-epithelial diffusion barrier. Functions as a homophilic cell-adhesion molecule. May play a role in early neuronal differentiation and axon outgrowth. This chain is Lachesin (Lac), found in Drosophila melanogaster (Fruit fly).